The chain runs to 200 residues: Histone chaperone asf1a-B (200 aa).

This sequence belongs to the ASF1 family. As to quaternary structure, interacts with histone H3 (including both histone H3.1 and H3.3) and histone H4.

The protein resides in the nucleus. Histone chaperone that facilitates histone deposition and histone exchange and removal during nucleosome assembly and disassembly. The polypeptide is Histone chaperone asf1a-B (asf1ab) (Xenopus laevis (African clawed frog)).